The primary structure comprises 623 residues: Bifunctional methionine biosynthesis protein MetXA/MetW (623 aa).

The span at 1-17 (MTSGRSTRVTMFESQAS) shows a compositional bias: polar residues. The interval 1–30 (MTSGRSTRVTMFESQASMGEPSNEDLSSTD) is disordered. The 309-residue stretch at 77 to 385 (NAVLVCHAVS…TTNAGHDAFL (309 aa)) folds into the AB hydrolase-1 domain. The Nucleophile role is filled by Ser-183. Arg-253 provides a ligand contact to substrate. Residues Asp-348 and His-381 contribute to the active site. Asp-382 contacts substrate. The tract at residues 417–619 (NVDEESILEI…NADTAVIAFH (203 aa)) is metW.

The protein in the N-terminal section; belongs to the AB hydrolase superfamily. MetX family. It in the C-terminal section; belongs to the MetW family. Homodimer.

The protein resides in the cytoplasm. It catalyses the reaction L-homoserine + acetyl-CoA = O-acetyl-L-homoserine + CoA. It participates in amino-acid biosynthesis; L-methionine biosynthesis via de novo pathway; O-acetyl-L-homoserine from L-homoserine: step 1/1. Functionally, transfers an acetyl group from acetyl-CoA to L-homoserine, forming acetyl-L-homoserine. This Rhodopirellula baltica (strain DSM 10527 / NCIMB 13988 / SH1) protein is Bifunctional methionine biosynthesis protein MetXA/MetW.